Consider the following 702-residue polypeptide: MNSLFASTARGLEELLKTELEKLGAVGCQVVQGGVHFQGDTRLIYQSLMWSRLASRIILPMGECKVYSDLDLYLGVQAINWTEIFNPGATFAVHFSGLNDTIRNSQYGAMKVKDAIVDAFTRKNLPRPNVDRESPDLRINVWLNKETASIALDLSGDGLHLRGYRDRTGLAPIKETLAAAIVMRSGWQPGTPLLDPMCGSGTLLIEAAMWATDRAPGLHRGHWGFSGWAQHDETIWQEVKAEAQTRARKGLAEYSSHFYGSDSDARVIERARSNARRAGIGELITFEVKDVAQLSNPLPKGPYGTVISNPPYGERLDSEPALIALHSLLGRTMKNQFGGWNLSLFSASPDLLGSLQLRADKQFKAKNGPLDCVQKNYHIAETTADSKPATVAEDYANRLRKNLKKLEKWARQEGIECYRLYDADLPEYNVAVDRYGDRAVIQEYAPPKTVDAQKARQRLFDIIAATLSVLGIPPNKLVLKTRERQKGKNQYQKMSEKGEFLEVSEYNARLWVNLTDYLDTGLFLDHRIARRMLGEMSKGKDFLNLFSYTGSASVHAGLGGARSTTTVDMSRTYLEWAERNLRLNGLSGRAHRLIQADCLGWLREANEQFDLIFIDPPTFSNSKRMEESFDVQRDHVALMKDLKRLLRKGGTIMFSNNKRGFRMDLEGLAELGLTAQEITQKTLSPDFARNRQIHNCWLIRAA.

In terms of domain architecture, THUMP spans 43–154 (LIYQSLMWSR…KETASIALDL (112 aa)).

The protein belongs to the methyltransferase superfamily. RlmKL family.

It localises to the cytoplasm. The enzyme catalyses guanosine(2445) in 23S rRNA + S-adenosyl-L-methionine = N(2)-methylguanosine(2445) in 23S rRNA + S-adenosyl-L-homocysteine + H(+). It catalyses the reaction guanosine(2069) in 23S rRNA + S-adenosyl-L-methionine = N(2)-methylguanosine(2069) in 23S rRNA + S-adenosyl-L-homocysteine + H(+). In terms of biological role, specifically methylates the guanine in position 2445 (m2G2445) and the guanine in position 2069 (m7G2069) of 23S rRNA. This chain is Ribosomal RNA large subunit methyltransferase K/L, found in Salmonella paratyphi B (strain ATCC BAA-1250 / SPB7).